The following is a 483-amino-acid chain: Probable cytochrome P450 517A1 (483 aa).

The chain crosses the membrane as a helical span at residues Met1–Lys21. Cys429 contributes to the heme binding site.

Belongs to the cytochrome P450 family. The cofactor is heme.

The protein resides in the membrane. This Dictyostelium discoideum (Social amoeba) protein is Probable cytochrome P450 517A1 (cyp517A1).